The chain runs to 211 residues: Guanylate kinase (211 aa).

The region spanning 5–184 is the Guanylate kinase-like domain; that stretch reads GLLIVFSGPS…AAERVKRIIE (180 aa). 12-19 provides a ligand contact to ATP; it reads GPSGVGKG.

This sequence belongs to the guanylate kinase family.

The protein localises to the cytoplasm. It catalyses the reaction GMP + ATP = GDP + ADP. Functionally, essential for recycling GMP and indirectly, cGMP. This chain is Guanylate kinase, found in Streptococcus pyogenes serotype M3 (strain SSI-1).